Here is a 224-residue protein sequence, read N- to C-terminus: E3 ubiquitin-protein ligase TRIM48 (224 aa).

An RING-type zinc finger spans residues 31–72 (CPICMNYFIDPVTIDCGHSFCRPCFYLNWQDIPILTQCFECI). A B box-type zinc finger spans residues 104–145 (SEEQMCGIHRETKKMFCEVDRSLLCLLCSSSQEHRYHRHCPA). Zn(2+) is bound by residues Cys109, His112, Cys131, and His137.

It belongs to the TRIM/RBCC family. In terms of assembly, interacts with PRMT1; the interaction leads to ubiquitination of PRMT1 by TRIM48. Interacts with MAP3K5. Interacts with STRAP.

The protein resides in the cytoplasm. It localises to the cytosol. It catalyses the reaction S-ubiquitinyl-[E2 ubiquitin-conjugating enzyme]-L-cysteine + [acceptor protein]-L-lysine = [E2 ubiquitin-conjugating enzyme]-L-cysteine + N(6)-ubiquitinyl-[acceptor protein]-L-lysine.. In terms of biological role, E3 ubiquitin-protein ligase which promotes K48-linked polyubiquitination of protein methyltransferase PRMT1, leading to PRMT1 degradation. This suppresses methylation of the PRMT1 substrate MAP3K5/ASK1, promoting its activation and increasing MAP3K5-dependent cell death induced by oxidative stress. TRIM48-mediated ubiquitination of PRMT1 also suppresses methylation of FOXO1 by PRMT1, leading to inhibition of FOXO1 transcriptional activity. The chain is E3 ubiquitin-protein ligase TRIM48 from Homo sapiens (Human).